Reading from the N-terminus, the 265-residue chain is Deoxycytidine kinase 1 (265 aa).

Position 30–38 (30–38 (GNIAAGKST)) interacts with ATP. The substrate site is built by glutamate 55, tyrosine 88, and glutamine 99. The Proton acceptor role is filled by glutamate 129. Substrate contacts are provided by arginine 130 and aspartate 135. 190–194 (RVYTR) contributes to the ATP binding site. Glutamate 199 serves as a coordination point for substrate. 242 to 244 (EDF) serves as a coordination point for ATP.

The protein belongs to the DCK/DGK family. Homodimer.

It localises to the nucleus. The catalysed reaction is 2'-deoxycytidine + a ribonucleoside 5'-triphosphate = dCMP + a ribonucleoside 5'-diphosphate + H(+). The enzyme catalyses 2'-deoxyguanosine + ATP = dGMP + ADP + H(+). It catalyses the reaction 2'-deoxyadenosine + ATP = dAMP + ADP + H(+). Functionally, phosphorylates the deoxyribonucleosides deoxyadenosine, deoxycytidine and deoxyguanosine with highest activity against deoxycytidine followed by deadenosine and deoxyguanosine. Shows only very minor activity against deoxyuridine and deoxythymidine. The polypeptide is Deoxycytidine kinase 1 (Xenopus laevis (African clawed frog)).